The following is a 191-amino-acid chain: Putative manganese efflux pump MntP (191 aa).

Helical transmembrane passes span 3 to 23, 37 to 57, 65 to 85, 107 to 129, 144 to 164, and 169 to 189; these read PISI…AAIG, LRAG…GWLL, VEAF…IHMI, WKLA…GLAF, CTLT…SMVG, and IIGG…HLHG.

The protein belongs to the MntP (TC 9.B.29) family.

It is found in the cell inner membrane. In terms of biological role, probably functions as a manganese efflux pump. The chain is Putative manganese efflux pump MntP from Stenotrophomonas maltophilia (strain R551-3).